Consider the following 346-residue polypeptide: UDP-3-O-acylglucosamine N-acyltransferase (346 aa).

His-253 serves as the catalytic Proton acceptor.

It belongs to the transferase hexapeptide repeat family. LpxD subfamily. Homotrimer.

It catalyses the reaction a UDP-3-O-[(3R)-3-hydroxyacyl]-alpha-D-glucosamine + a (3R)-hydroxyacyl-[ACP] = a UDP-2-N,3-O-bis[(3R)-3-hydroxyacyl]-alpha-D-glucosamine + holo-[ACP] + H(+). It functions in the pathway bacterial outer membrane biogenesis; LPS lipid A biosynthesis. Functionally, catalyzes the N-acylation of UDP-3-O-acylglucosamine using 3-hydroxyacyl-ACP as the acyl donor. Is involved in the biosynthesis of lipid A, a phosphorylated glycolipid that anchors the lipopolysaccharide to the outer membrane of the cell. This is UDP-3-O-acylglucosamine N-acyltransferase from Rickettsia peacockii (strain Rustic).